The following is a 173-amino-acid chain: Translation initiation factor IF-3 (173 aa).

The protein belongs to the IF-3 family. Monomer.

Its subcellular location is the cytoplasm. In terms of biological role, IF-3 binds to the 30S ribosomal subunit and shifts the equilibrium between 70S ribosomes and their 50S and 30S subunits in favor of the free subunits, thus enhancing the availability of 30S subunits on which protein synthesis initiation begins. This Caulobacter sp. (strain K31) protein is Translation initiation factor IF-3.